A 236-amino-acid chain; its full sequence is 2-C-methyl-D-erythritol 4-phosphate cytidylyltransferase (236 aa).

Belongs to the IspD/TarI cytidylyltransferase family. IspD subfamily.

It carries out the reaction 2-C-methyl-D-erythritol 4-phosphate + CTP + H(+) = 4-CDP-2-C-methyl-D-erythritol + diphosphate. The protein operates within isoprenoid biosynthesis; isopentenyl diphosphate biosynthesis via DXP pathway; isopentenyl diphosphate from 1-deoxy-D-xylulose 5-phosphate: step 2/6. Functionally, catalyzes the formation of 4-diphosphocytidyl-2-C-methyl-D-erythritol from CTP and 2-C-methyl-D-erythritol 4-phosphate (MEP). This Burkholderia thailandensis (strain ATCC 700388 / DSM 13276 / CCUG 48851 / CIP 106301 / E264) protein is 2-C-methyl-D-erythritol 4-phosphate cytidylyltransferase.